We begin with the raw amino-acid sequence, 266 residues long: Hemin import ATP-binding protein HmuV (266 aa).

The ABC transporter domain occupies 2 to 242; that stretch reads IEAVDICVQR…QNLRDVYSCS (241 aa). Residue 34–41 participates in ATP binding; sequence GPNGSGKS.

The protein belongs to the ABC transporter superfamily. Heme (hemin) importer (TC 3.A.1.14.5) family. The complex is composed of two ATP-binding proteins (HmuV), two transmembrane proteins (HmuU) and a solute-binding protein (HmuT).

It is found in the cell inner membrane. Functionally, part of the ABC transporter complex HmuTUV involved in hemin import. Responsible for energy coupling to the transport system. The sequence is that of Hemin import ATP-binding protein HmuV from Bartonella henselae (strain ATCC 49882 / DSM 28221 / CCUG 30454 / Houston 1) (Rochalimaea henselae).